We begin with the raw amino-acid sequence, 296 residues long: Lipoyl synthase (296 aa).

Residues Cys-35, Cys-40, Cys-46, Cys-61, Cys-65, Cys-68, and Ser-274 each coordinate [4Fe-4S] cluster. Positions 47-263 (WSSKHVTVMI…KEAAYARGFL (217 aa)) constitute a Radical SAM core domain.

This sequence belongs to the radical SAM superfamily. Lipoyl synthase family. [4Fe-4S] cluster serves as cofactor.

Its subcellular location is the cytoplasm. It carries out the reaction [[Fe-S] cluster scaffold protein carrying a second [4Fe-4S](2+) cluster] + N(6)-octanoyl-L-lysyl-[protein] + 2 oxidized [2Fe-2S]-[ferredoxin] + 2 S-adenosyl-L-methionine + 4 H(+) = [[Fe-S] cluster scaffold protein] + N(6)-[(R)-dihydrolipoyl]-L-lysyl-[protein] + 4 Fe(3+) + 2 hydrogen sulfide + 2 5'-deoxyadenosine + 2 L-methionine + 2 reduced [2Fe-2S]-[ferredoxin]. It participates in protein modification; protein lipoylation via endogenous pathway; protein N(6)-(lipoyl)lysine from octanoyl-[acyl-carrier-protein]: step 2/2. In terms of biological role, catalyzes the radical-mediated insertion of two sulfur atoms into the C-6 and C-8 positions of the octanoyl moiety bound to the lipoyl domains of lipoate-dependent enzymes, thereby converting the octanoylated domains into lipoylated derivatives. The protein is Lipoyl synthase of Neorickettsia sennetsu (strain ATCC VR-367 / Miyayama) (Ehrlichia sennetsu).